The primary structure comprises 202 residues: NADH dehydrogenase [ubiquinone] iron-sulfur protein 7, mitochondrial (202 aa).

The N-terminal 56 residues, 1-56 (MLRRTSFNFTGRAMISRGSPEWSHRLDLKKGKKTTMMHKLGTSKPNNALQYAQMTL), are a transit peptide targeting the mitochondrion. The [4Fe-4S] cluster site is built by C77, C78, C142, and C172.

This sequence belongs to the complex I 20 kDa subunit family. Complex I is composed of 45 different subunits This is a component of the iron-sulfur (IP) fragment of the enzyme. The cofactor is [4Fe-4S] cluster.

It localises to the mitochondrion. The catalysed reaction is a ubiquinone + NADH + 5 H(+)(in) = a ubiquinol + NAD(+) + 4 H(+)(out). In terms of biological role, core subunit of the mitochondrial membrane respiratory chain NADH dehydrogenase (Complex I) that is believed to belong to the minimal assembly required for catalysis. Complex I functions in the transfer of electrons from NADH to the respiratory chain. The immediate electron acceptor for the enzyme is believed to be ubiquinone. This chain is NADH dehydrogenase [ubiquinone] iron-sulfur protein 7, mitochondrial (NDHK), found in Trypanosoma brucei brucei.